A 278-amino-acid polypeptide reads, in one-letter code: Formyltetrahydrofolate deformylase (278 aa).

The region spanning 6-85 is the ACT domain; that stretch reads ILLTDCPDDK…RLIGTQRKRI (80 aa). The active site involves Asp223.

The protein belongs to the PurU family.

The enzyme catalyses (6R)-10-formyltetrahydrofolate + H2O = (6S)-5,6,7,8-tetrahydrofolate + formate + H(+). Its pathway is purine metabolism; IMP biosynthesis via de novo pathway; formate from 10-formyl-5,6,7,8-tetrahydrofolate: step 1/1. Catalyzes the hydrolysis of 10-formyltetrahydrofolate (formyl-FH4) to formate and tetrahydrofolate (FH4). The sequence is that of Formyltetrahydrofolate deformylase from Haemophilus influenzae (strain ATCC 51907 / DSM 11121 / KW20 / Rd).